A 159-amino-acid chain; its full sequence is MIALYPGSFDPITLGHLDVIERASRLFSKVIVAVLKNPNKTPLFSPEQRQAQISLSTAHLKNVEVDTFSGLTVAYARQRGAKVIVRGLRVLSDFDVELQMAHTNKLLAPELETLFLATASEHSFVSSSLVKEVAKLGGPIDHLVPAPVIRDLRERFPLA.

Serine 8 contributes to the substrate binding site. ATP is bound by residues 8–9 and histidine 16; that span reads SF. Substrate contacts are provided by lysine 40, threonine 72, and arginine 86. ATP-binding positions include 87–89, glutamate 97, and 122–128; these read GLR and HSFVSSS.

It belongs to the bacterial CoaD family. Homohexamer. Requires Mg(2+) as cofactor.

It localises to the cytoplasm. The catalysed reaction is (R)-4'-phosphopantetheine + ATP + H(+) = 3'-dephospho-CoA + diphosphate. Its pathway is cofactor biosynthesis; coenzyme A biosynthesis; CoA from (R)-pantothenate: step 4/5. Its function is as follows. Reversibly transfers an adenylyl group from ATP to 4'-phosphopantetheine, yielding dephospho-CoA (dPCoA) and pyrophosphate. The polypeptide is Phosphopantetheine adenylyltransferase (Synechococcus sp. (strain JA-2-3B'a(2-13)) (Cyanobacteria bacterium Yellowstone B-Prime)).